We begin with the raw amino-acid sequence, 1357 residues long: DNA-directed RNA polymerase subunit beta (1357 aa).

Belongs to the RNA polymerase beta chain family. As to quaternary structure, the RNAP catalytic core consists of 2 alpha, 1 beta, 1 beta' and 1 omega subunit. When a sigma factor is associated with the core the holoenzyme is formed, which can initiate transcription.

The enzyme catalyses RNA(n) + a ribonucleoside 5'-triphosphate = RNA(n+1) + diphosphate. Functionally, DNA-dependent RNA polymerase catalyzes the transcription of DNA into RNA using the four ribonucleoside triphosphates as substrates. This Pseudomonas aeruginosa (strain ATCC 15692 / DSM 22644 / CIP 104116 / JCM 14847 / LMG 12228 / 1C / PRS 101 / PAO1) protein is DNA-directed RNA polymerase subunit beta.